Here is a 219-residue protein sequence, read N- to C-terminus: Ribose-5-phosphate isomerase A (219 aa).

Substrate-binding positions include 28–31, 81–84, and 94–97; these read TGST, DGAD, and KGGG. Glutamate 103 (proton acceptor) is an active-site residue. A substrate-binding site is contributed by lysine 121.

The protein belongs to the ribose 5-phosphate isomerase family. In terms of assembly, homodimer.

The enzyme catalyses aldehydo-D-ribose 5-phosphate = D-ribulose 5-phosphate. The protein operates within carbohydrate degradation; pentose phosphate pathway; D-ribose 5-phosphate from D-ribulose 5-phosphate (non-oxidative stage): step 1/1. In terms of biological role, catalyzes the reversible conversion of ribose-5-phosphate to ribulose 5-phosphate. This Enterobacter cloacae protein is Ribose-5-phosphate isomerase A.